The chain runs to 76 residues: Large ribosomal subunit protein uL24 (76 aa).

It belongs to the universal ribosomal protein uL24 family. In terms of assembly, part of the 50S ribosomal subunit.

Its function is as follows. One of two assembly initiator proteins, it binds directly to the 5'-end of the 23S rRNA, where it nucleates assembly of the 50S subunit. In terms of biological role, one of the proteins that surrounds the polypeptide exit tunnel on the outside of the subunit. The polypeptide is Large ribosomal subunit protein uL24 (Sulfurimonas denitrificans (strain ATCC 33889 / DSM 1251) (Thiomicrospira denitrificans (strain ATCC 33889 / DSM 1251))).